Consider the following 154-residue polypeptide: Myoglobin (154 aa).

One can recognise a Globin domain in the interval 2 to 148; the sequence is GLSDGEWQLV…FRNDMAAKYK (147 aa). Serine 4 is subject to Phosphoserine. Histidine 65 contributes to the nitrite binding site. Histidine 65 serves as a coordination point for O2. Threonine 68 is subject to Phosphothreonine. Residue histidine 94 coordinates heme b.

This sequence belongs to the globin family. In terms of assembly, monomeric.

The protein resides in the cytoplasm. The protein localises to the sarcoplasm. It catalyses the reaction Fe(III)-heme b-[protein] + nitric oxide + H2O = Fe(II)-heme b-[protein] + nitrite + 2 H(+). The catalysed reaction is H2O2 + AH2 = A + 2 H2O. Its function is as follows. Monomeric heme protein which primary function is to store oxygen and facilitate its diffusion within muscle tissues. Reversibly binds oxygen through a pentacoordinated heme iron and enables its timely and efficient release as needed during periods of heightened demand. Depending on the oxidative conditions of tissues and cells, and in addition to its ability to bind oxygen, it also has a nitrite reductase activity whereby it regulates the production of bioactive nitric oxide. Under stress conditions, like hypoxia and anoxia, it also protects cells against reactive oxygen species thanks to its pseudoperoxidase activity. This chain is Myoglobin (MB), found in Macaca fascicularis (Crab-eating macaque).